Reading from the N-terminus, the 188-residue chain is dTTP/UTP pyrophosphatase (188 aa).

Residue Asp-70 is the Proton acceptor of the active site.

It belongs to the Maf family. YhdE subfamily. It depends on a divalent metal cation as a cofactor.

The protein resides in the cytoplasm. It carries out the reaction dTTP + H2O = dTMP + diphosphate + H(+). The catalysed reaction is UTP + H2O = UMP + diphosphate + H(+). Functionally, nucleoside triphosphate pyrophosphatase that hydrolyzes dTTP and UTP. May have a dual role in cell division arrest and in preventing the incorporation of modified nucleotides into cellular nucleic acids. This Clostridium botulinum (strain Alaska E43 / Type E3) protein is dTTP/UTP pyrophosphatase.